The sequence spans 1046 residues: uncharacterized protein (1046 aa).

The span at 594–615 (LNSIPSDSSSSGSSRKSSPRGS) shows a compositional bias: low complexity. Residues 594–622 (LNSIPSDSSSSGSSRKSSPRGSPNLGEAP) are disordered.

This is an uncharacterized protein from Invertebrate iridescent virus 6 (IIV-6).